A 1375-amino-acid polypeptide reads, in one-letter code: Capping protein, Arp2/3 and myosin-I linker protein 3 (1375 aa).

A disordered region spans residues 124-151 (IRRGNADTPEGPRDTSPNSETSTSTTHS). Residues 138–151 (TSPNSETSTSTTHS) are compositionally biased toward low complexity. LRR repeat units lie at residues 244-264 (SLEELVLDNAGLKTDFVQKLA), 274-295 (VLHALILSHNPIEDKGFLSLSQ), 303-323 (GLTKLCLAKTAISPRGLQALG), 335-357 (SLRYLDLSKNPGLLATDEANALY), 365-386 (ALVHLDLSGTDCAVDMLLGALL), 392-413 (HLTYLNLARNSCSHRKGREAPP), 424-444 (TLSHVNLSATRLPLEALRALL), 455-475 (DLHLDLSSCELRSAGAQALQE), 482-501 (CIGSLDLSDNGFDSDLLTLV), and 509-530 (SLKHLFLGKNFNVKAKTLEEIL). 2 disordered regions span residues 864 to 901 (RTLSDPPGGASQGQDPSSRGRGRNHDHEETDDELGTNI) and 969 to 1375 (KLRH…PGTD). A compositionally biased stretch (pro residues) spans 981–997 (PRTTPPGPGRPSVPVPG). A compositionally biased stretch (basic and acidic residues) spans 1007–1022 (RLDEGLEDFFSRRVMD). Over residues 1047-1062 (QKKRRRGLFHFRRPRS) the composition is skewed to basic residues. Pro residues predominate over residues 1078 to 1097 (LPPPPPPPPTQESPPSPDPP). Positions 1098 to 1108 (SLGNNSSPCWS) are enriched in low complexity. A compositionally biased stretch (basic and acidic residues) spans 1219 to 1229 (RRAEATWHIAE). Residues 1233–1244 (ANHSCQSPSPAS) show a composition bias toward polar residues. Pro residues predominate over residues 1272–1281 (PIGPRPPKPV). The span at 1348–1360 (QSCDKLEPDRRQP) shows a compositional bias: basic and acidic residues.

Belongs to the CARMIL family.

The protein localises to the cytoplasm. It is found in the cell membrane. In Mus musculus (Mouse), this protein is Capping protein, Arp2/3 and myosin-I linker protein 3 (Carmil3).